The primary structure comprises 315 residues: Acetaldehyde dehydrogenase 2 (315 aa).

11 to 14 contributes to the NAD(+) binding site; the sequence is SGNI. Residue cysteine 129 is the Acyl-thioester intermediate of the active site. NAD(+) contacts are provided by residues 160–168 and asparagine 290; that span reads SAGPGTRSN.

The protein belongs to the acetaldehyde dehydrogenase family.

The enzyme catalyses acetaldehyde + NAD(+) + CoA = acetyl-CoA + NADH + H(+). The protein is Acetaldehyde dehydrogenase 2 of Mycobacterium sp. (strain KMS).